We begin with the raw amino-acid sequence, 125 residues long: Small ribosomal subunit protein uS13 (125 aa).

Residues 91 to 125 (HRRSLPVRGQNTQTNARTRKGKRKTVAGKKKAARK) are disordered. Basic residues predominate over residues 107–125 (RTRKGKRKTVAGKKKAARK).

Belongs to the universal ribosomal protein uS13 family. Part of the 30S ribosomal subunit. Forms a loose heterodimer with protein S19. Forms two bridges to the 50S subunit in the 70S ribosome.

Its function is as follows. Located at the top of the head of the 30S subunit, it contacts several helices of the 16S rRNA. In the 70S ribosome it contacts the 23S rRNA (bridge B1a) and protein L5 of the 50S subunit (bridge B1b), connecting the 2 subunits; these bridges are implicated in subunit movement. Contacts the tRNAs in the A and P-sites. In Chlorobium phaeovibrioides (strain DSM 265 / 1930) (Prosthecochloris vibrioformis (strain DSM 265)), this protein is Small ribosomal subunit protein uS13.